Reading from the N-terminus, the 577-residue chain is Urease subunit alpha (577 aa).

The 442-residue stretch at 136–577 (GGIDCHVHFI…LPMAQRYFLF (442 aa)) folds into the Urease domain. 3 residues coordinate Ni(2+): His-141, His-143, and Lys-224. Lys-224 is subject to N6-carboxylysine. Position 226 (His-226) interacts with substrate. Ni(2+) is bound by residues His-253 and His-279. The Proton donor role is filled by His-327. Position 367 (Asp-367) interacts with Ni(2+).

It belongs to the metallo-dependent hydrolases superfamily. Urease alpha subunit family. As to quaternary structure, heterotrimer of UreA (gamma), UreB (beta) and UreC (alpha) subunits. Three heterotrimers associate to form the active enzyme. Ni cation is required as a cofactor. Carboxylation allows a single lysine to coordinate two nickel ions.

It is found in the cytoplasm. The catalysed reaction is urea + 2 H2O + H(+) = hydrogencarbonate + 2 NH4(+). Its pathway is nitrogen metabolism; urea degradation; CO(2) and NH(3) from urea (urease route): step 1/1. In Mycobacteroides abscessus (strain ATCC 19977 / DSM 44196 / CCUG 20993 / CIP 104536 / JCM 13569 / NCTC 13031 / TMC 1543 / L948) (Mycobacterium abscessus), this protein is Urease subunit alpha.